Reading from the N-terminus, the 463-residue chain is MTIEKNLSDVQQKYADQFQEDVVKSFQTGYGITPDTQIDAGALRREILDDQITMLTWTNEDLIFYRDISRRPAQSTVVKYDQYLRHGNVGHSRFVKEIGVAPVSDPNIRQKTVSMKYVSDTKNMSIASGLVNNIADPSQILTEDAIAVVAKTIEWASFYGDASLTSEVEGEGLEFDGLAKLIDKNNVINAKGNQLTEKHLNEAAVRIGKGFGTATDAYMPIGVHADFVNSILGRQMQLMQDNSGNVNTGYSVNGFYSSRGFIKLHGSTVMENELILDESLQPLPNAPQPAKVTATVETKQKGAFENEEDRAGLSYKVVVNSDDAQSAPSEEVTATVSNVDDGVKLSINVNAMYQQQPQFVSIYRQGKETGMYFLIKRVPVKDAQEDGTIVFVDKNETLPETADVFVGEMSPQVVHLFELLPMMKLPLAQINASITFAVLWYGALALRAPKKWARIKNVRYIAV.

The propeptide occupies 1-24; sequence MTIEKNLSDVQQKYADQFQEDVVK.

The protein localises to the virion. In terms of biological role, assembles to form an icosahedral capsid. The sequence is that of Major capsid protein from Staphylococcus phage K.